The sequence spans 425 residues: cAMP/cGMP-dependent 3',5'-cAMP/cGMP phosphodiesterase 7 (425 aa).

The first 17 residues, 1-17 (MKYLILILIFFIEINNG), serve as a signal peptide directing secretion.

Belongs to the cyclic nucleotide phosphodiesterase class-II family.

Its subcellular location is the secreted. It localises to the extracellular space. It is found in the cell surface. The enzyme catalyses 3',5'-cyclic AMP + H2O = AMP + H(+). The catalysed reaction is 3',5'-cyclic GMP + H2O = GMP + H(+). Inhibited by dithiotreitol (DTT). Functionally, phosphodiesterase with dual cAMP/cGMP specificity. However, displays a preference for cAMP over cGMP. Seems to regulate cAMP/cGMP concentration especially during cell aggregation. The polypeptide is cAMP/cGMP-dependent 3',5'-cAMP/cGMP phosphodiesterase 7 (pde7) (Dictyostelium discoideum (Social amoeba)).